The chain runs to 468 residues: DNA polymerase IV 1 (468 aa).

Residues 6–188 form the UmuC domain; it reads VLHLDMDAFF…LPVRRLWGIG (183 aa). The Mg(2+) site is built by aspartate 10 and aspartate 105. Glutamate 106 is an active-site residue.

This sequence belongs to the DNA polymerase type-Y family. In terms of assembly, monomer. Mg(2+) is required as a cofactor.

It localises to the cytoplasm. It catalyses the reaction DNA(n) + a 2'-deoxyribonucleoside 5'-triphosphate = DNA(n+1) + diphosphate. In terms of biological role, poorly processive, error-prone DNA polymerase involved in untargeted mutagenesis. Copies undamaged DNA at stalled replication forks, which arise in vivo from mismatched or misaligned primer ends. These misaligned primers can be extended by PolIV. Exhibits no 3'-5' exonuclease (proofreading) activity. May be involved in translesional synthesis, in conjunction with the beta clamp from PolIII. The protein is DNA polymerase IV 1 (dinB1) of Mycobacterium tuberculosis (strain CDC 1551 / Oshkosh).